A 459-amino-acid chain; its full sequence is Phosphomethylpyrimidine synthase (459 aa).

Residues N80, M109, Y139, H175, 195 to 197, 236 to 239, and E275 each bind substrate; these read SRG and DSLR. Position 279 (H279) interacts with Zn(2+). Y302 contributes to the substrate binding site. Position 343 (H343) interacts with Zn(2+). The [4Fe-4S] cluster site is built by C423, C426, and C431.

This sequence belongs to the ThiC family. The cofactor is [4Fe-4S] cluster.

The catalysed reaction is 5-amino-1-(5-phospho-beta-D-ribosyl)imidazole + S-adenosyl-L-methionine = 4-amino-2-methyl-5-(phosphooxymethyl)pyrimidine + CO + 5'-deoxyadenosine + formate + L-methionine + 3 H(+). Its pathway is cofactor biosynthesis; thiamine diphosphate biosynthesis. Catalyzes the synthesis of the hydroxymethylpyrimidine phosphate (HMP-P) moiety of thiamine from aminoimidazole ribotide (AIR) in a radical S-adenosyl-L-methionine (SAM)-dependent reaction. This chain is Phosphomethylpyrimidine synthase, found in Gloeothece citriformis (strain PCC 7424) (Cyanothece sp. (strain PCC 7424)).